Consider the following 401-residue polypeptide: Imidazolonepropionase (401 aa).

Fe(3+) is bound by residues His-66 and His-68. 2 residues coordinate Zn(2+): His-66 and His-68. 4-imidazolone-5-propanoate-binding residues include Arg-75, Tyr-138, and His-171. Tyr-138 is an N-formimidoyl-L-glutamate binding site. His-236 is a binding site for Fe(3+). His-236 contacts Zn(2+). Gln-239 contributes to the 4-imidazolone-5-propanoate binding site. Asp-311 provides a ligand contact to Fe(3+). Asp-311 serves as a coordination point for Zn(2+). Asn-313 and Gly-315 together coordinate N-formimidoyl-L-glutamate. Thr-316 provides a ligand contact to 4-imidazolone-5-propanoate.

This sequence belongs to the metallo-dependent hydrolases superfamily. HutI family. Zn(2+) serves as cofactor. The cofactor is Fe(3+).

The protein resides in the cytoplasm. It carries out the reaction 4-imidazolone-5-propanoate + H2O = N-formimidoyl-L-glutamate. It functions in the pathway amino-acid degradation; L-histidine degradation into L-glutamate; N-formimidoyl-L-glutamate from L-histidine: step 3/3. Functionally, catalyzes the hydrolytic cleavage of the carbon-nitrogen bond in imidazolone-5-propanoate to yield N-formimidoyl-L-glutamate. It is the third step in the universal histidine degradation pathway. The protein is Imidazolonepropionase of Pseudomonas putida (Arthrobacter siderocapsulatus).